The chain runs to 591 residues: Metalloendopeptidase OPG085 (591 aa).

Histidine 41 provides a ligand contact to Zn(2+). The active site involves glutamate 44. Residue histidine 45 participates in Zn(2+) binding.

Belongs to the peptidase M44 family. Zn(2+) is required as a cofactor. Undergoes proteolytic processing during the course of infection. May be cleaved into 46 kDa and 22 kDa products (Potential).

The protein localises to the virion. In terms of biological role, probably involved in maturation of some viral proteins by processing them preferentially at Ala-Gly-|-Ser/Thr/Lys motifs. Does not seem to be responsible for the cleavage of major core proteins. The sequence is that of Metalloendopeptidase OPG085 (OPG085) from Homo sapiens (Human).